A 248-amino-acid chain; its full sequence is 23S rRNA (guanosine-2'-O-)-methyltransferase RlmB (248 aa).

Residues Gly-198, Leu-218, and Leu-227 each contribute to the S-adenosyl-L-methionine site.

It belongs to the class IV-like SAM-binding methyltransferase superfamily. RNA methyltransferase TrmH family. RlmB subfamily.

It localises to the cytoplasm. The enzyme catalyses guanosine(2251) in 23S rRNA + S-adenosyl-L-methionine = 2'-O-methylguanosine(2251) in 23S rRNA + S-adenosyl-L-homocysteine + H(+). Functionally, specifically methylates the ribose of guanosine 2251 in 23S rRNA. The chain is 23S rRNA (guanosine-2'-O-)-methyltransferase RlmB from Pseudomonas putida (strain ATCC 47054 / DSM 6125 / CFBP 8728 / NCIMB 11950 / KT2440).